Consider the following 354-residue polypeptide: Coiled-coil domain-containing protein 86 (354 aa).

A disordered region spans residues 1-354 (MDTPLRRSRR…QPPQRPATKV (354 aa)). Residues Ser18 and Ser24 each carry the phosphoserine modification. The span at 31-44 (VLVEFESNPKETGE) shows a compositional bias: basic and acidic residues. Ser47 and Ser53 each carry phosphoserine. The segment covering 49–58 (PGLGSPSRQP) has biased composition (low complexity). Position 60 is a phosphothreonine (Thr60). Phosphoserine occurs at positions 61, 64, 75, 86, 105, 108, 123, and 183. Over residues 97–107 (FPQNQPESSPE) the composition is skewed to polar residues. Basic and acidic residues predominate over residues 199–211 (PAREGPAPKKREG). Phosphoserine occurs at positions 212 and 213. The span at 232–248 (GKPKSGRVWKDRSKKRF) shows a compositional bias: basic residues. Basic and acidic residues-rich tracts occupy residues 267–289 (DRQE…ERRR) and 297–311 (AENL…RKAE). Residues 274-317 (AKDFARHLEEEKERRRQEKKKRRAENLRRRLENERKAEIVQVIR) adopt a coiled-coil conformation. Basic residues predominate over residues 320-330 (AKLKRAKKKQL). A Citrulline modification is found at Arg336.

Post-translationally, citrullinated by PADI4.

The protein localises to the nucleus. The protein resides in the chromosome. Its subcellular location is the nucleolus. In terms of biological role, required for proper chromosome segregation during mitosis and error-free mitotic progression. The protein is Coiled-coil domain-containing protein 86 of Bos taurus (Bovine).